The sequence spans 328 residues: Acetaldehyde dehydrogenase 3 (328 aa).

Residue 17-20 participates in NAD(+) binding; sequence SGNI. Cysteine 135 functions as the Acyl-thioester intermediate in the catalytic mechanism. Residues 166–174 and asparagine 298 each bind NAD(+); that span reads SAGPGTRAN.

This sequence belongs to the acetaldehyde dehydrogenase family.

The catalysed reaction is acetaldehyde + NAD(+) + CoA = acetyl-CoA + NADH + H(+). The chain is Acetaldehyde dehydrogenase 3 from Nocardia farcinica (strain IFM 10152).